A 125-amino-acid polypeptide reads, in one-letter code: Succinate dehydrogenase assembly factor 3, mitochondrial (125 aa).

The N-terminal 30 residues, 1–30, are a transit peptide targeting the mitochondrion; the sequence is MPGKHVSRVRALYRRILLLHRALPPDLKAL.

Belongs to the complex I LYR family. SDHAF3 subfamily. Interacts with Sdhb within an Sdha-Sdhb subcomplex.

Its subcellular location is the mitochondrion matrix. Its function is as follows. Plays an essential role in the assembly of succinate dehydrogenase (SDH), an enzyme complex (also referred to as respiratory complex II) that is a component of both the tricarboxylic acid (TCA) cycle and the mitochondrial electron transport chain, and which couples the oxidation of succinate to fumarate with the reduction of ubiquinone (coenzyme Q) to ubiquinol. Promotes maturation of the iron-sulfur protein subunit Sdhb of the SDH catalytic dimer, protecting it from the deleterious effects of oxidants. May act together with SDHAF1. The protein is Succinate dehydrogenase assembly factor 3, mitochondrial of Mus musculus (Mouse).